Here is a 116-residue protein sequence, read N- to C-terminus: Ribosome-binding factor A (116 aa).

Belongs to the RbfA family. Monomer. Binds 30S ribosomal subunits, but not 50S ribosomal subunits or 70S ribosomes.

The protein resides in the cytoplasm. Its function is as follows. One of several proteins that assist in the late maturation steps of the functional core of the 30S ribosomal subunit. Associates with free 30S ribosomal subunits (but not with 30S subunits that are part of 70S ribosomes or polysomes). Required for efficient processing of 16S rRNA. May interact with the 5'-terminal helix region of 16S rRNA. In Staphylococcus aureus (strain JH9), this protein is Ribosome-binding factor A.